Consider the following 101-residue polypeptide: Urease subunit gamma (101 aa).

This sequence belongs to the urease gamma subunit family. Heterotrimer of UreA (gamma), UreB (beta) and UreC (alpha) subunits. Three heterotrimers associate to form the active enzyme.

The protein localises to the cytoplasm. The catalysed reaction is urea + 2 H2O + H(+) = hydrogencarbonate + 2 NH4(+). Its pathway is nitrogen metabolism; urea degradation; CO(2) and NH(3) from urea (urease route): step 1/1. The chain is Urease subunit gamma from Corynebacterium kroppenstedtii (strain DSM 44385 / JCM 11950 / CIP 105744 / CCUG 35717).